The primary structure comprises 504 residues: Anaerobic nitric oxide reductase transcription regulator NorR (504 aa).

The residue at position 57 (aspartate 57) is a 4-aspartylphosphate. The Sigma-54 factor interaction domain occupies methionine 187–valine 416. ATP-binding positions include glycine 215 to glutamate 222 and alanine 278 to glutamate 287. Residues tryptophan 479–lysine 498 constitute a DNA-binding region (H-T-H motif).

The protein operates within nitrogen metabolism; nitric oxide reduction. Functionally, required for the expression of anaerobic nitric oxide (NO) reductase, acts as a transcriptional activator for at least the norVW operon. Activation also requires sigma-54. This Escherichia coli O81 (strain ED1a) protein is Anaerobic nitric oxide reductase transcription regulator NorR.